Reading from the N-terminus, the 760-residue chain is MFFNFKKYFLIKVFFFVLILTLCYGLYLYVKINRFINGKVWNFPTSIYGRIVNLEPGNSYSQKEVLHLLKSTMYRKVDLVMLPGEYSIKNNTIEFIRRAFDFPDIREDEFHARLYFNKDTLVKIKNIDNNHDFSFFRLEPKLIAMLKSPEAKKRMFIPRNQYPEMLVKTLLAIEDKYFYEHDGIHLSSIGRAFLVNLMAGRTIQGGSTLTQQLIKNLFLTNTRSILRKINEIYMALILDRFYTKDRILELYLNEVYLGQDGDEQIRGFPLASIYYFGRPINELNLEQYALLVGMVKGASLYSPWTNPNLALKRRNLVLFLLYKQKYITRKIYKDLCKRSLNVQPKGNIISSHPSFIQLVCEEFHKKIYNPIKNFPGTKIFTTLDYTSQNAVEQAVKIEIPILKRKKRLKDLEVAMIVIDRFTGEVQALIGSSKPEFNGYNRALKTRRSIGSLSKPITYLTALSQPEKYHLNTWISNYPLSIKLDSGQYWTPKNNNFSFSKKVLLLDALIHSINIPTVNLSINIGLKKLVDSWLLLGISKKYITPLPSISLGAINLTPFEIAQVFQIIGSGGYKSSLSSVRSIISDDGKVLYQNLPQSIHIESSEASYLTLYGMQQVVKSGTAKSLGTIFKEFSLAGKTGTTNNLVDNWFVGIDGKQIVITWIGRDNNHTTRLYSSSGAMQIYKRYLQYQRPVPLVLKAPNNINMFYINNLGELFCKKNNQHNRMLPIWSIKNKKICNDKLSERFSIKKKKNFLFWLKNLF.

Residues 1 to 8 (MFFNFKKY) are Cytoplasmic-facing. A helical; Signal-anchor for type II membrane protein transmembrane segment spans residues 9-29 (FLIKVFFFVLILTLCYGLYLY). Residues 30–760 (VKINRFINGK…NFLFWLKNLF (731 aa)) lie on the Extracellular side of the membrane. Positions 136 to 308 (FRLEPKLIAM…SLYSPWTNPN (173 aa)) are transglycosylase. Glu-174 (proton donor; for transglycosylase activity) is an active-site residue. The transpeptidase stretch occupies residues 392–684 (EQAVKIEIPI…SSGAMQIYKR (293 aa)). Ser-451 functions as the Acyl-ester intermediate; for transpeptidase activity in the catalytic mechanism.

The protein in the N-terminal section; belongs to the glycosyltransferase 51 family. It in the C-terminal section; belongs to the transpeptidase family.

It is found in the cell membrane. The catalysed reaction is [GlcNAc-(1-&gt;4)-Mur2Ac(oyl-L-Ala-gamma-D-Glu-L-Lys-D-Ala-D-Ala)](n)-di-trans,octa-cis-undecaprenyl diphosphate + beta-D-GlcNAc-(1-&gt;4)-Mur2Ac(oyl-L-Ala-gamma-D-Glu-L-Lys-D-Ala-D-Ala)-di-trans,octa-cis-undecaprenyl diphosphate = [GlcNAc-(1-&gt;4)-Mur2Ac(oyl-L-Ala-gamma-D-Glu-L-Lys-D-Ala-D-Ala)](n+1)-di-trans,octa-cis-undecaprenyl diphosphate + di-trans,octa-cis-undecaprenyl diphosphate + H(+). The enzyme catalyses Preferential cleavage: (Ac)2-L-Lys-D-Ala-|-D-Ala. Also transpeptidation of peptidyl-alanyl moieties that are N-acyl substituents of D-alanine.. It functions in the pathway cell wall biogenesis; peptidoglycan biosynthesis. Functionally, cell wall formation. Synthesis of cross-linked peptidoglycan from the lipid intermediates. The enzyme has a penicillin-insensitive transglycosylase N-terminal domain (formation of linear glycan strands) and a penicillin-sensitive transpeptidase C-terminal domain (cross-linking of the peptide subunits). The polypeptide is Penicillin-binding protein 1B (mrcB) (Buchnera aphidicola subsp. Acyrthosiphon pisum (strain APS) (Acyrthosiphon pisum symbiotic bacterium)).